A 382-amino-acid chain; its full sequence is Dual-specificity RNA methyltransferase RlmN (382 aa).

Glutamate 95 acts as the Proton acceptor in catalysis. A Radical SAM core domain is found at 101-348 (EDDRGTLCIS…TTVRKTRGDD (248 aa)). An intrachain disulfide couples cysteine 108 to cysteine 353. The [4Fe-4S] cluster site is built by cysteine 115, cysteine 119, and cysteine 122. S-adenosyl-L-methionine is bound by residues 179–180 (GE), serine 211, 233–235 (SLH), and asparagine 310. Cysteine 353 acts as the S-methylcysteine intermediate in catalysis.

Belongs to the radical SAM superfamily. RlmN family. [4Fe-4S] cluster is required as a cofactor.

It localises to the cytoplasm. The enzyme catalyses adenosine(2503) in 23S rRNA + 2 reduced [2Fe-2S]-[ferredoxin] + 2 S-adenosyl-L-methionine = 2-methyladenosine(2503) in 23S rRNA + 5'-deoxyadenosine + L-methionine + 2 oxidized [2Fe-2S]-[ferredoxin] + S-adenosyl-L-homocysteine. It catalyses the reaction adenosine(37) in tRNA + 2 reduced [2Fe-2S]-[ferredoxin] + 2 S-adenosyl-L-methionine = 2-methyladenosine(37) in tRNA + 5'-deoxyadenosine + L-methionine + 2 oxidized [2Fe-2S]-[ferredoxin] + S-adenosyl-L-homocysteine. In terms of biological role, specifically methylates position 2 of adenine 2503 in 23S rRNA and position 2 of adenine 37 in tRNAs. m2A2503 modification seems to play a crucial role in the proofreading step occurring at the peptidyl transferase center and thus would serve to optimize ribosomal fidelity. In Bordetella pertussis (strain Tohama I / ATCC BAA-589 / NCTC 13251), this protein is Dual-specificity RNA methyltransferase RlmN.